A 294-amino-acid polypeptide reads, in one-letter code: UDP-3-O-acyl-N-acetylglucosamine deacetylase (294 aa).

Histidine 75, histidine 232, and aspartate 236 together coordinate Zn(2+). Histidine 259 acts as the Proton donor in catalysis.

Belongs to the LpxC family. Zn(2+) serves as cofactor.

The enzyme catalyses a UDP-3-O-[(3R)-3-hydroxyacyl]-N-acetyl-alpha-D-glucosamine + H2O = a UDP-3-O-[(3R)-3-hydroxyacyl]-alpha-D-glucosamine + acetate. The protein operates within glycolipid biosynthesis; lipid IV(A) biosynthesis; lipid IV(A) from (3R)-3-hydroxytetradecanoyl-[acyl-carrier-protein] and UDP-N-acetyl-alpha-D-glucosamine: step 2/6. Its function is as follows. Catalyzes the hydrolysis of UDP-3-O-myristoyl-N-acetylglucosamine to form UDP-3-O-myristoylglucosamine and acetate, the committed step in lipid A biosynthesis. This Campylobacter hominis (strain ATCC BAA-381 / DSM 21671 / CCUG 45161 / LMG 19568 / NCTC 13146 / CH001A) protein is UDP-3-O-acyl-N-acetylglucosamine deacetylase.